The chain runs to 475 residues: Exodeoxyribonuclease I (475 aa).

In terms of domain architecture, Exonuclease spans 13-192; that stretch reads FHDYETFGTH…AMADVYATIA (180 aa). Residues Asp15 and Glu17 each coordinate Mg(2+). Substrate is bound by residues Glu17 and Arg165. A Mg(2+)-binding site is contributed by Asp186. The region spanning 202–355 is the ExoI SH3-like domain; that stretch reads PRLFDYLFTH…KVVAIFAEAE (154 aa). One can recognise an ExoI C-terminal domain in the interval 358–475; sequence TPSDNVDAQL…ALWQYAEEIV (118 aa).

In terms of assembly, monomer. Interacts with ssb (via C-terminus); this interaction stimulates the exonuclease activity by recruiting the enzyme to its substrate. Mg(2+) is required as a cofactor.

The catalysed reaction is Exonucleolytic cleavage in the 3'- to 5'-direction to yield nucleoside 5'-phosphates.. Inhibited by 10 mM EDTA. Its function is as follows. Degrades single-stranded DNA (ssDNA) in a highly processive manner. Also functions as a DNA deoxyribophosphodiesterase that releases deoxyribose-phosphate moieties following the cleavage of DNA at an apurinic/apyrimidinic (AP) site by either an AP endonuclease or AP lyase. This is Exodeoxyribonuclease I (sbcB) from Escherichia coli (strain K12).